The primary structure comprises 459 residues: Nuclear distribution protein PAC1-2 (459 aa).

The stretch at 56–83 forms a coiled coil; the sequence is TSIVRLQKKIMDLESRNAALQTELANLT. WD repeat units follow at residues 108–149, 151–191, 195–244, 246–284, 306–348, 350–389, 394–438, and 440–459; these read SHRD…RTVK, HTRA…KNIR, GHDH…KTLR, HTAW…SDHK, QYLA…LGTL, GHDN…KCVK, AHER…DTPD, and QVRC…VFAD.

This sequence belongs to the WD repeat LIS1/nudF family. Self-associates. Interacts with NDL1 and dynein.

It localises to the cytoplasm. The protein localises to the cytoskeleton. Its subcellular location is the spindle pole. Its function is as follows. Positively regulates the activity of the minus-end directed microtubule motor protein dynein. May enhance dynein-mediated microtubule sliding by targeting dynein to the microtubule plus end. Required for nuclear migration during vegetative growth as well as development. Required for retrograde early endosome (EE) transport from the hyphal tip. Required for localization of dynein to the mitotic spindle poles. Recruits additional proteins to the dynein complex at SPBs. The protein is Nuclear distribution protein PAC1-2 of Uncinocarpus reesii (strain UAMH 1704).